We begin with the raw amino-acid sequence, 230 residues long: Cytidylate kinase (230 aa).

12 to 20 lines the ATP pocket; sequence GPSGAGKGT.

This sequence belongs to the cytidylate kinase family. Type 1 subfamily.

The protein resides in the cytoplasm. The enzyme catalyses CMP + ATP = CDP + ADP. The catalysed reaction is dCMP + ATP = dCDP + ADP. The chain is Cytidylate kinase from Shewanella sediminis (strain HAW-EB3).